The chain runs to 219 residues: Large ribosomal subunit protein eL13 (219 aa).

The interval Lys198–Thr219 is disordered.

Belongs to the eukaryotic ribosomal protein eL13 family. As to quaternary structure, component of the 60S large ribosomal subunit (LSU).

Its subcellular location is the cytoplasm. In terms of biological role, component of the ribosome, a large ribonucleoprotein complex responsible for the synthesis of proteins in the cell. The small ribosomal subunit (SSU) binds messenger RNAs (mRNAs) and translates the encoded message by selecting cognate aminoacyl-transfer RNA (tRNA) molecules. The large subunit (LSU) contains the ribosomal catalytic site termed the peptidyl transferase center (PTC), which catalyzes the formation of peptide bonds, thereby polymerizing the amino acids delivered by tRNAs into a polypeptide chain. The nascent polypeptides leave the ribosome through a tunnel in the LSU and interact with protein factors that function in enzymatic processing, targeting, and the membrane insertion of nascent chains at the exit of the ribosomal tunnel. As part of the LSU, it is probably required for its formation and the maturation of rRNAs. In Spodoptera frugiperda (Fall armyworm), this protein is Large ribosomal subunit protein eL13 (RpL13).